The sequence spans 294 residues: Glycine--tRNA ligase alpha subunit (294 aa).

Belongs to the class-II aminoacyl-tRNA synthetase family. In terms of assembly, tetramer of two alpha and two beta subunits.

The protein resides in the cytoplasm. The enzyme catalyses tRNA(Gly) + glycine + ATP = glycyl-tRNA(Gly) + AMP + diphosphate. In Trichormus variabilis (strain ATCC 29413 / PCC 7937) (Anabaena variabilis), this protein is Glycine--tRNA ligase alpha subunit.